Consider the following 138-residue polypeptide: Transcriptional activator protein Pur-alpha (138 aa).

Phosphoserine is present on serine 70.

Belongs to the PUR DNA-binding protein family. Homodimer, heterodimer with PURB and heterotrimer with PURB and YBX1/Y-box protein 1. Interacts with FMR1; this interaction occurs in association with polyribosome.

It is found in the nucleus. In terms of biological role, this is a probable transcription activator that specifically binds the purine-rich single strand of the PUR element located upstream of the c-Myc gene. May play a role in the initiation of DNA replication and in recombination. This chain is Transcriptional activator protein Pur-alpha, found in Rattus norvegicus (Rat).